A 425-amino-acid chain; its full sequence is Sensor histidine kinase NarS (425 aa).

6 helical membrane passes run 42–62, 71–91, 107–127, 130–150, 155–175, and 181–201; these read IASV…VVGT, IVLI…AYSA, LEPF…QLLS, GIYP…DVST, VVLA…PVML, and PETI…LMVV. In terms of domain architecture, Histidine kinase spans 224–425; that stretch reads QTMTASEVLQ…HVCVELPLKR (202 aa). Residue histidine 241 is modified to Phosphohistidine; by autocatalysis.

In terms of processing, autophosphorylated on His-241.

The protein localises to the cell membrane. The enzyme catalyses ATP + protein L-histidine = ADP + protein N-phospho-L-histidine.. Its function is as follows. Member of the two-component regulatory system NarS/NarL involved in gene expression during aerobic nitrate metabolism. Plays therefore a crucial role in anaerobic survival of mycobacteria in host. Functions as a sensor protein kinase which is autophosphorylated at a histidine residue and transfers its phosphate group to the conserved aspartic acid residue in the regulatory domain of NarL. In turn, NarL binds to the upstream promoter regions of target genes to regulate their expression during aerobic nitrate metabolism. The protein is Sensor histidine kinase NarS of Mycobacterium tuberculosis (strain ATCC 25618 / H37Rv).